The following is a 207-amino-acid chain: Ribosomal RNA small subunit methyltransferase G (207 aa).

Residues Gly74, Leu79, 125-126, and Arg140 contribute to the S-adenosyl-L-methionine site; that span reads VE.

The protein belongs to the methyltransferase superfamily. RNA methyltransferase RsmG family.

It localises to the cytoplasm. It catalyses the reaction guanosine(527) in 16S rRNA + S-adenosyl-L-methionine = N(7)-methylguanosine(527) in 16S rRNA + S-adenosyl-L-homocysteine. In terms of biological role, specifically methylates the N7 position of guanine in position 527 of 16S rRNA. The protein is Ribosomal RNA small subunit methyltransferase G of Shewanella halifaxensis (strain HAW-EB4).